The primary structure comprises 92 residues: Small ribosomal subunit protein uS19 (92 aa).

The protein belongs to the universal ribosomal protein uS19 family.

Its function is as follows. Protein S19 forms a complex with S13 that binds strongly to the 16S ribosomal RNA. This Buchnera aphidicola subsp. Acyrthosiphon pisum (strain 5A) protein is Small ribosomal subunit protein uS19.